The primary structure comprises 209 residues: Glutathione S-transferase 1, isoform D (209 aa).

Residues 1–80 (MDFYYLPGSA…YLAEKYGKDD (80 aa)) form the GST N-terminal domain. Glutathione-binding positions include S9, 50–52 (HCI), and 64–66 (ESR). In terms of domain architecture, GST C-terminal spans 86 to 207 (DPQKRAVVNQ…AGADEFKAKF (122 aa)).

Belongs to the GST superfamily. Theta family. Homodimer.

It catalyses the reaction RX + glutathione = an S-substituted glutathione + a halide anion + H(+). The catalysed reaction is 1,1,1-trichloro-2,2-bis(4-chlorophenyl)ethane = 1,1-dichloro-2,2-bis(4-chlorophenyl)ethylene + chloride + H(+). With respect to regulation, inhibited by S-hexylglutathione. Functionally, conjugation of reduced glutathione to a wide number of exogenous and endogenous hydrophobic electrophiles. Has DDT dehydrochlorinase activity. This is Glutathione S-transferase 1, isoform D (GstD1) from Anopheles gambiae (African malaria mosquito).